A 610-amino-acid chain; its full sequence is Serine/threonine-protein kinase VRK1 (610 aa).

In terms of domain architecture, Protein kinase spans 32 to 384 (FIVGKQFATG…PRKRTTRKAV (353 aa)). Residues 38 to 46 (FATGGFGRI) and Lys-61 contribute to the ATP site. The active-site Proton acceptor is the Asp-167. Disordered regions lie at residues 317–476 (IQKT…NKVA), 498–530 (ISVA…VGEG), 544–577 (KKAK…KGRR), and 590–610 (ERLA…SSEV). A compositionally biased stretch (basic and acidic residues) spans 352 to 373 (AVKEESDNKDNDEVEVKPEKKA). The segment covering 388 to 397 (NDSDDNEEQY) has biased composition (acidic residues). Over residues 447 to 458 (TTPSSAASTSRS) the composition is skewed to low complexity. Over residues 465-474 (LTSSTASSNK) the composition is skewed to polar residues. The segment covering 502–517 (SDKSPTTSTPSSSSGL) has biased composition (low complexity). 2 stretches are compositionally biased toward polar residues: residues 550-559 (SGISSATKAS) and 594-610 (SRQT…SSEV).

It belongs to the protein kinase superfamily. CK1 Ser/Thr protein kinase family. VRK subfamily. Autophosphorylates in vitro. Present in germ cells at all stages of progression from the mitotic zone to mature oocytes, but not in maturing spermatids (at the protein level). Expressed in the ventral nerve cord and vulva cells.

It localises to the nucleus. The protein resides in the cytoplasm. It is found in the cajal body. It catalyses the reaction L-seryl-[protein] + ATP = O-phospho-L-seryl-[protein] + ADP + H(+). The enzyme catalyses L-threonyl-[protein] + ATP = O-phospho-L-threonyl-[protein] + ADP + H(+). In terms of biological role, serine/threonine kinase that phosphorylates baf-1, thus regulating the association of baf-1 with chromatin and nuclear membrane proteins during nuclear envelope formation. May act through the egl-17 signaling pathway. Essential in hermaphrodites for formation of the vulva, uterus, and uterine seam cells and for development and maintenance of the somatic gonad and thus the germ line. Acts to prevent cep-1 from triggering an inappropriate cell cycle arrest, thereby promoting germ cell proliferation. Regulates anchor cell polarity and the timing of anchor cell invasion through the basement membranes separating vulval and somatic gonadal cells during the L3 larval stage. In Caenorhabditis elegans, this protein is Serine/threonine-protein kinase VRK1.